A 538-amino-acid polypeptide reads, in one-letter code: Cytochrome P450 monooxygenase claM (538 aa).

A helical transmembrane segment spans residues 36–56 (LSIGLVVLIGAISSFLLQQFL). 2 N-linked (GlcNAc...) asparagine glycosylation sites follow: N306 and N425. C472 contributes to the heme binding site.

Belongs to the cytochrome P450 family. The cofactor is heme.

The protein resides in the membrane. The catalysed reaction is 2 nataloe emodin + reduced [NADPH--hemoprotein reductase] + O2 = cladofulvin + oxidized [NADPH--hemoprotein reductase] + 2 H2O + H(+). The protein operates within pigment biosynthesis. Functionally, cytochrome P450 monooxygenase; part of the gene cluster that mediates the biosynthesis of the bianthraquinone cladofulvin, a conidial pigment not required for virulence but that plays a role in fitness and resistance to environmental stresses including UV light and low-temperature stress. The pathway begins with the synthesis of atrochrysone thioester by the polyketide synthase (PKS) claG. The atrochrysone carboxyl ACP thioesterase claF then breaks the thioester bond and releases the atrochrysone carboxylic acid from claG. This compound is decarboxylated by claH to yield emodin, which is further converted to chrysophanol hydroquinone by the reductase claC and the dehydratase claB. The cytochrome monooxygenase P450 claM then catalyzes the dimerization of nataloe-emodin to cladofulvin. This is Cytochrome P450 monooxygenase claM from Passalora fulva (Tomato leaf mold).